A 559-amino-acid chain; its full sequence is 3-phosphoinositide-dependent protein kinase 1 (559 aa).

At Y9 the chain carries Phosphotyrosine; by SRC and INSR. A Phosphoserine modification is found at S25. The interval 25–83 (SPSMVRSQTEPSSSPGIPSGVSRQGSTMDGTTAEARPSTNPLQQHPAQLPPQPRKKRPE) is disordered. Residues 35 to 46 (PSSSPGIPSGVS) are compositionally biased toward low complexity. In terms of domain architecture, Protein kinase spans 85–345 (FKFGKILGEG…YGPLKAHPFF (261 aa)). ATP is bound by residues 95-97 (SFS) and K114. Residues 116-160 (LEKRHIIKENKVPYVTRERDVMSRLDHPFFVKLYFTFQDDEKLYF) form a PIF-pocket region. ATP-binding positions include 163–165 (SYA) and E169. D208 acts as the Proton acceptor in catalysis. Residues E212 and D226 each contribute to the ATP site. S244 bears the Phosphoserine mark. At K307 the chain carries N6-acetyllysine. Position 357 is a phosphothreonine; by MELK (T357). 2 positions are modified to phosphotyrosine; by SRC and INSR: Y376 and Y379. Residue S396 is modified to Phosphoserine. Position 397 is a phosphoserine; by MAP3K5 (S397). S399 bears the Phosphoserine mark. At S401 the chain carries Phosphoserine; by MAP3K5. The residue at position 413 (S413) is a Phosphoserine. The PH domain occupies 462-553 (KMGPVDKRKG…EVWRQQYQSS (92 aa)). S504 carries the post-translational modification Phosphoserine; by PKC/PRKCQ. T516 carries the post-translational modification Phosphothreonine; by autocatalysis. Residue S532 is modified to Phosphoserine; by PKC/PRKCQ.

This sequence belongs to the protein kinase superfamily. AGC Ser/Thr protein kinase family. PDPK1 subfamily. In terms of assembly, homodimer in its autoinhibited state. Active as monomer. Interacts with NPRL2, PPARG, PAK1, PTK2B, GRB14, PKN1 (via C-terminus), STRAP and IKKB. The Tyr-9 phosphorylated form interacts with SRC, RASA1 and CRK (via their SH2 domains). Interacts with SGK3 in a phosphorylation-dependent manner. The tyrosine-phosphorylated form interacts with PTPN6. The Ser-244 phosphorylated form interacts with YWHAH and YWHAQ. Binds INSR in response to insulin. Interacts (via PH domain) with SMAD3, SMAD4 and SMAD7. Interacts with PKN2; the interaction stimulates PDPK1 autophosphorylation, its PI(3,4,5)P3-dependent kinase activity toward 'Ser-473' of AKT1 but also activates its kinase activity toward PRKCD and PRKCZ. Post-translationally, phosphorylation on Ser-244 in the activation loop is required for full activity. PDPK1 itself can autophosphorylate Ser-244, leading to its own activation. Autophosphorylation is inhibited by the apoptotic C-terminus cleavage product of PKN2. Tyr-9 phosphorylation is critical for stabilization of both PDPK1 and the PDPK1/SRC complex via HSP90-mediated protection of PDPK1 degradation. Angiotensin II stimulates the tyrosine phosphorylation of PDPK1 in vascular smooth muscle in a calcium- and SRC-dependent manner. Phosphorylated on Tyr-9, Tyr-376 and Tyr-379 by INSR in response to insulin. Palmitate negatively regulates autophosphorylation at Ser-244 and palmitate-induced phosphorylation at Ser-532 and Ser-504 by PKC/PRKCQ negatively regulates its ability to phosphorylate PKB/AKT1. Phosphorylation at Thr-357 by MELK partially inhibits kinase activity, the inhibition is cooperatively enhanced by phosphorylation at Ser-397 and Ser-401 by MAP3K5. Monoubiquitinated in the kinase domain, deubiquitinated by USP4.

It localises to the cytoplasm. Its subcellular location is the nucleus. The protein localises to the cell membrane. The protein resides in the cell junction. It is found in the focal adhesion. It catalyses the reaction L-seryl-[protein] + ATP = O-phospho-L-seryl-[protein] + ADP + H(+). The enzyme catalyses L-threonyl-[protein] + ATP = O-phospho-L-threonyl-[protein] + ADP + H(+). With respect to regulation, homodimerization regulates its activity by maintaining the kinase in an autoinhibitory conformation. NPRL2 down-regulates its activity by interfering with tyrosine phosphorylation at the Tyr-9, Tyr-376 and Tyr-379 residues. The 14-3-3 protein YWHAQ acts as a negative regulator by association with the residues surrounding the Ser-244 residue. STRAP positively regulates its activity by enhancing its autophosphorylation and by stimulating its dissociation from YWHAQ. SMAD2, SMAD3, SMAD4 and SMAD7 also positively regulate its activity by stimulating its dissociation from YWHAQ. Activated by phosphorylation on Tyr-9, Tyr-376 and Tyr-379 by INSR in response to insulin. In terms of biological role, serine/threonine kinase which acts as a master kinase, phosphorylating and activating a subgroup of the AGC family of protein kinases. Its targets include: protein kinase B (PKB/AKT1, PKB/AKT2, PKB/AKT3), p70 ribosomal protein S6 kinase (RPS6KB1), p90 ribosomal protein S6 kinase (RPS6KA1, RPS6KA2 and RPS6KA3), cyclic AMP-dependent protein kinase (PRKACA), protein kinase C (PRKCD and PRKCZ), serum and glucocorticoid-inducible kinase (SGK1, SGK2 and SGK3), p21-activated kinase-1 (PAK1), TSSK3, protein kinase PKN (PKN1 and PKN2). Plays a central role in the transduction of signals from insulin by providing the activating phosphorylation to PKB/AKT1, thus propagating the signal to downstream targets controlling cell proliferation and survival, as well as glucose and amino acid uptake and storage. Negatively regulates the TGF-beta-induced signaling by: modulating the association of SMAD3 and SMAD7 with TGF-beta receptor, phosphorylating SMAD2, SMAD3, SMAD4 and SMAD7, preventing the nuclear translocation of SMAD3 and SMAD4 and the translocation of SMAD7 from the nucleus to the cytoplasm in response to TGF-beta. Activates PPARG transcriptional activity and promotes adipocyte differentiation. Activates the NF-kappa-B pathway via phosphorylation of IKKB. The tyrosine phosphorylated form is crucial for the regulation of focal adhesions by angiotensin II. Controls proliferation, survival, and growth of developing pancreatic cells. Participates in the regulation of Ca(2+) entry and Ca(2+)-activated K(+) channels of mast cells. Essential for the motility of vascular endothelial cells (ECs) and is involved in the regulation of their chemotaxis. Plays a critical role in cardiac homeostasis by serving as a dual effector for cell survival and beta-adrenergic response. Plays an important role during thymocyte development by regulating the expression of key nutrient receptors on the surface of pre-T cells and mediating Notch-induced cell growth and proliferative responses. Provides negative feedback inhibition to toll-like receptor-mediated NF-kappa-B activation in macrophages. In Rattus norvegicus (Rat), this protein is 3-phosphoinositide-dependent protein kinase 1 (Pdpk1).